Reading from the N-terminus, the 426-residue chain is MRSVEEQQARISAAAVAPRPIRVAIAEAQGLMCAEEVVTERPMPGFDQAAIDGYAVRSVDVAGVGDTGGVQVFADHGDLDGRDVLTLPVMGTIEAGARTLSRLQPRQAVRVQTGAPLPTLADAVLPLRWTDGGMSRVRVLRGAPSGAYVRRAGDDVQPGDVAVRAGTIIGAAQVGLLAAVGRERVLVHPRPRLSVMAVGGELVDISRTPGNGQVYDVNSYALAAAGRDACAEVNRVGIVSNDPTELGEIVEGQLNRAEVVVIAGGVGGAAAEAVRSVLSELGEMEVVRVAMHPGSVQGFGQLGRDGVPTFLLPANPVSALVVFEVMVRPLIRLSLGKRHPMRRIVSARTLSPITSVAGRKGYLRGQLMRDQDSGEYLVQALGGAPGASSHLLATLAEANCLVVVPTGAEQIRTGEIVDVAFLAQHG.

This sequence belongs to the MoeA family. The cofactor is Mg(2+).

It catalyses the reaction adenylyl-molybdopterin + molybdate = Mo-molybdopterin + AMP + H(+). It participates in cofactor biosynthesis; molybdopterin biosynthesis. In terms of biological role, catalyzes the insertion of molybdate into adenylated molybdopterin with the concomitant release of AMP. In Mycobacterium tuberculosis (strain ATCC 25618 / H37Rv), this protein is Molybdopterin molybdenumtransferase 1 (moeA1).